The sequence spans 410 residues: Arginine deiminase (410 aa).

The active-site Amidino-cysteine intermediate is the C400.

It belongs to the arginine deiminase family.

The protein localises to the cytoplasm. It catalyses the reaction L-arginine + H2O = L-citrulline + NH4(+). It participates in amino-acid degradation; L-arginine degradation via ADI pathway; carbamoyl phosphate from L-arginine: step 1/2. This is Arginine deiminase from Levilactobacillus brevis (strain ATCC 367 / BCRC 12310 / CIP 105137 / JCM 1170 / LMG 11437 / NCIMB 947 / NCTC 947) (Lactobacillus brevis).